Here is a 29-residue protein sequence, read N- to C-terminus: Cytochrome b6-f complex subunit 8 (29 aa).

A helical transmembrane segment spans residues 3-23 (IVSLAWAVLMVVFTFSLSLVV).

The protein belongs to the PetN family. As to quaternary structure, the 4 large subunits of the cytochrome b6-f complex are cytochrome b6, subunit IV (17 kDa polypeptide, PetD), cytochrome f and the Rieske protein, while the 4 small subunits are PetG, PetL, PetM and PetN. The complex functions as a dimer.

The protein localises to the plastid. Its subcellular location is the chloroplast thylakoid membrane. In terms of biological role, component of the cytochrome b6-f complex, which mediates electron transfer between photosystem II (PSII) and photosystem I (PSI), cyclic electron flow around PSI, and state transitions. The chain is Cytochrome b6-f complex subunit 8 from Drimys granadensis.